The following is a 448-amino-acid chain: Tubulin alpha-5 chain (448 aa).

The short motif at 1–4 (MREC) is the MREC motif element. GTP is bound at residue Gln11. At Lys40 the chain carries N6-acetyllysine. Glu71, Ser140, Gly144, Thr145, Thr179, Asn206, and Asn228 together coordinate GTP. Glu71 is a Mg(2+) binding site. Residue Glu254 is part of the active site.

Belongs to the tubulin family. In terms of assembly, dimer of alpha and beta chains. A typical microtubule is a hollow water-filled tube with an outer diameter of 25 nm and an inner diameter of 15 nM. Alpha-beta heterodimers associate head-to-tail to form protofilaments running lengthwise along the microtubule wall with the beta-tubulin subunit facing the microtubule plus end conferring a structural polarity. Microtubules usually have 13 protofilaments but different protofilament numbers can be found in some organisms and specialized cells. Mg(2+) is required as a cofactor. In terms of processing, some glutamate residues at the C-terminus are polyglycylated, resulting in polyglycine chains on the gamma-carboxyl group. Glycylation is mainly limited to tubulin incorporated into axonemes (cilia and flagella) whereas glutamylation is prevalent in neuronal cells, centrioles, axonemes, and the mitotic spindle. Both modifications can coexist on the same protein on adjacent residues, and lowering polyglycylation levels increases polyglutamylation, and reciprocally. The precise function of polyglycylation is still unclear. Some glutamate residues at the C-terminus are polyglutamylated, resulting in polyglutamate chains on the gamma-carboxyl group. Polyglutamylation plays a key role in microtubule severing by spastin (SPAST). SPAST preferentially recognizes and acts on microtubules decorated with short polyglutamate tails: severing activity by SPAST increases as the number of glutamates per tubulin rises from one to eight, but decreases beyond this glutamylation threshold. Post-translationally, acetylation of alpha chains at Lys-40 is located inside the microtubule lumen. This modification has been correlated with increased microtubule stability, intracellular transport and ciliary assembly.

The protein localises to the cytoplasm. Its subcellular location is the cytoskeleton. The catalysed reaction is GTP + H2O = GDP + phosphate + H(+). In terms of biological role, tubulin is the major constituent of microtubules, a cylinder consisting of laterally associated linear protofilaments composed of alpha- and beta-tubulin heterodimers. Microtubules grow by the addition of GTP-tubulin dimers to the microtubule end, where a stabilizing cap forms. Below the cap, tubulin dimers are in GDP-bound state, owing to GTPase activity of alpha-tubulin. This is Tubulin alpha-5 chain from Gallus gallus (Chicken).